Reading from the N-terminus, the 508-residue chain is Photosystem II CP47 reaction center protein (508 aa).

6 helical membrane-spanning segments follow: residues 21-36 (AVHI…WAGS), 101-115 (IVFS…IWHW), 140-156 (GIHL…FGAF), 203-218 (IAAG…FHLS), 237-252 (VLSS…AFVV), and 457-472 (SFAL…HGAR).

This sequence belongs to the PsbB/PsbC family. PsbB subfamily. In terms of assembly, PSII is composed of 1 copy each of membrane proteins PsbA, PsbB, PsbC, PsbD, PsbE, PsbF, PsbH, PsbI, PsbJ, PsbK, PsbL, PsbM, PsbT, PsbX, PsbY, PsbZ, Psb30/Ycf12, at least 3 peripheral proteins of the oxygen-evolving complex and a large number of cofactors. It forms dimeric complexes. It depends on Binds multiple chlorophylls. PSII binds additional chlorophylls, carotenoids and specific lipids. as a cofactor.

It is found in the plastid. Its subcellular location is the chloroplast thylakoid membrane. One of the components of the core complex of photosystem II (PSII). It binds chlorophyll and helps catalyze the primary light-induced photochemical processes of PSII. PSII is a light-driven water:plastoquinone oxidoreductase, using light energy to abstract electrons from H(2)O, generating O(2) and a proton gradient subsequently used for ATP formation. The chain is Photosystem II CP47 reaction center protein from Ranunculus macranthus (Large buttercup).